The chain runs to 236 residues: NAP1-binding protein 2 (236 aa).

Serine 102 bears the Phosphoserine mark. The 62-residue stretch at isoleucine 110 to proline 171 folds into the SH3 domain. Residues serine 196 and serine 235 each carry the phosphoserine modification.

As to quaternary structure, interacts with PBS2 and PTC1.

It is found in the cytoplasm. Negatively regulates the high-osmolarity glycerol (HOG) pathway through its negative regulation of the HOG1 kinase activity. Mediates the binding between the PTC1 phosphatase and the PBS2 MAP/ERK kinase (MEK). With PTC1, regulates endoplasmic reticulum inheritance through the cell wall integrity (CWI) MAPK pathway by modulating the MAPK, SLT2. This Saccharomyces cerevisiae (strain ATCC 204508 / S288c) (Baker's yeast) protein is NAP1-binding protein 2 (NBP2).